The chain runs to 318 residues: Ankyrin repeat and SOCS box protein 7 (318 aa).

ANK repeat units follow at residues 13 to 42 (QEES…SPNG), 46 to 75 (NGWT…DPTV), 80 to 109 (GGFT…RSDI), 116 to 145 (DGWT…EVDP), 149 to 178 (KGTT…NIDI), 180 to 208 (NGFL…DTNL), and 213 to 242 (DGQT…DTNT). The region spanning 265–318 (LDFLQEVTRQPRNLQDLCRIKIRQCIGLQNLKLLDELPIAKVMKDYLKHKSDDI) is the SOCS box domain.

It belongs to the ankyrin SOCS box (ASB) family. In terms of assembly, interacts with CUL5. Interacts with RNF7. Interacts with PSRC1.

The protein operates within protein modification; protein ubiquitination. In terms of biological role, probable substrate-recognition component of a SCF-like ECS (Elongin-Cullin-SOCS-box protein) E3 ubiquitin-protein ligase complex which mediates the ubiquitination and subsequent proteasomal degradation of target proteins. Plays a role in spindle dynamics and genome integrity by targeting the mitotic progression protein PSRC1 for proteasomal degradation in a cell cycle-dependent manner. Also participates in meiosis by mediating the proper attachment between kinetochores and microtubules. In Pongo abelii (Sumatran orangutan), this protein is Ankyrin repeat and SOCS box protein 7 (ASB7).